A 311-amino-acid chain; its full sequence is Bifunctional protein FolD (311 aa).

174 to 176 (GKG) is a binding site for NADP(+).

It belongs to the tetrahydrofolate dehydrogenase/cyclohydrolase family. In terms of assembly, homodimer.

It carries out the reaction (6R)-5,10-methylene-5,6,7,8-tetrahydrofolate + NADP(+) = (6R)-5,10-methenyltetrahydrofolate + NADPH. The enzyme catalyses (6R)-5,10-methenyltetrahydrofolate + H2O = (6R)-10-formyltetrahydrofolate + H(+). Its pathway is one-carbon metabolism; tetrahydrofolate interconversion. Catalyzes the oxidation of 5,10-methylenetetrahydrofolate to 5,10-methenyltetrahydrofolate and then the hydrolysis of 5,10-methenyltetrahydrofolate to 10-formyltetrahydrofolate. The sequence is that of Bifunctional protein FolD from Pyrobaculum aerophilum (strain ATCC 51768 / DSM 7523 / JCM 9630 / CIP 104966 / NBRC 100827 / IM2).